The sequence spans 127 residues: MRFLFLLFIVFPAIEIGIFLFLGNLIGILPTVLFMILTGIIGAAAAKKQGTEVYYKVQRDLQYGKMPGEAIADGLCIFIGGLLLMLPGFLSDLAGACLLIPFTRGWCKPILFKWLRGMSKNKRIIIK.

4 helical membrane-spanning segments follow: residues 3–22 (FLFLLFIVFPAIEIGIFLFL), 26–46 (IGILPTVLFMILTGIIGAAAA), 70–90 (AIADGLCIFIGGLLLMLPGFL), and 93–115 (LAGACLLIPFTRGWCKPILFKWL).

This sequence belongs to the UPF0716 (FxsA) family.

It is found in the cell membrane. In Bacillus subtilis (strain 168), this protein is UPF0716 protein YtzA (ytzA).